The following is a 94-amino-acid chain: Pyrimidine/purine nucleoside phosphorylase (94 aa).

It belongs to the nucleoside phosphorylase PpnP family.

The enzyme catalyses a purine D-ribonucleoside + phosphate = a purine nucleobase + alpha-D-ribose 1-phosphate. It carries out the reaction adenosine + phosphate = alpha-D-ribose 1-phosphate + adenine. The catalysed reaction is cytidine + phosphate = cytosine + alpha-D-ribose 1-phosphate. It catalyses the reaction guanosine + phosphate = alpha-D-ribose 1-phosphate + guanine. The enzyme catalyses inosine + phosphate = alpha-D-ribose 1-phosphate + hypoxanthine. It carries out the reaction thymidine + phosphate = 2-deoxy-alpha-D-ribose 1-phosphate + thymine. The catalysed reaction is uridine + phosphate = alpha-D-ribose 1-phosphate + uracil. It catalyses the reaction xanthosine + phosphate = alpha-D-ribose 1-phosphate + xanthine. Catalyzes the phosphorolysis of diverse nucleosides, yielding D-ribose 1-phosphate and the respective free bases. Can use uridine, adenosine, guanosine, cytidine, thymidine, inosine and xanthosine as substrates. Also catalyzes the reverse reactions. This Pseudomonas entomophila (strain L48) protein is Pyrimidine/purine nucleoside phosphorylase.